Consider the following 510-residue polypeptide: Serine carboxypeptidase-like 48 (510 aa).

Residues Met1 to Ser25 form the signal peptide. Disulfide bonds link Cys141/Cys383, Cys309/Cys326, and Cys349/Cys354. N-linked (GlcNAc...) asparagine glycosylation is found at Asn158 and Asn159. Residue Ser231 is part of the active site. Residues Asp421 and His478 contribute to the active site.

The protein belongs to the peptidase S10 family. Ubiquitous.

Its subcellular location is the secreted. Functionally, probable carboxypeptidase. This is Serine carboxypeptidase-like 48 (SCPL48) from Arabidopsis thaliana (Mouse-ear cress).